A 427-amino-acid polypeptide reads, in one-letter code: Riboflavin transporter rft-1 (427 aa).

Topologically, residues 1-2 (MK) are cytoplasmic. The helical transmembrane segment at 3 to 23 (TFLFTFCLVAIFGSSSWIGTN) threads the bilayer. Topologically, residues 24–42 (SVWMELSLLTAKLPEGWNL) are extracellular. The helical transmembrane segment at 43–63 (PSYLSAIVQIACLGPLIYSII) threads the bilayer. The Cytoplasmic portion of the chain corresponds to 64–73 (HKGIKMTIPT). A helical membrane pass occupies residues 74-94 (VPLIFIFMVLACICQLGLCFF). Over 95–111 (WDDTGYIFGAIRSWPLY) the chain is Extracellular. A helical membrane pass occupies residues 112–132 (LLLFGLAIVDAISSVLFLPFM). The Cytoplasmic segment spans residues 133–139 (AQFHPSF). The chain crosses the membrane as a helical span at residues 140 to 160 (LNAYFVGMGLSALIPSLLSLI). Residues 161 to 184 (QGTSNYWCDDNKTPHYYPPRFSVS) lie on the Extracellular side of the membrane. A helical transmembrane segment spans residues 185–205 (MFFLINFFFTCAAVAAFLVLY). Topologically, residues 206–261 (KIGAHKNSSQVEPEPKHSIQIIQGDSTTDVNEVNTESSFQETSSIPDSSSATGARL) are cytoplasmic. The chain crosses the membrane as a helical span at residues 262 to 282 (AFLLLTTALVNAQMNGIVTSV). Topologically, residues 283–297 (QSYATLVYSQNTYHY) are extracellular. The helical transmembrane segment at 298–318 (AVTLSNVISPLASYLQFFVKI) threads the bilayer. Residues 319–322 (RSLP) lie on the Cytoplasmic side of the membrane. Residues 323–343 (ILAFLTLCSSLTTAVIIYLAA) form a helical membrane-spanning segment. The Extracellular portion of the chain corresponds to 344–353 (LSPNWIFNSE). Residues 354–374 (TAGTIISIASSLIAAGLHSYL) traverse the membrane as a helical segment. Over 375-391 (RVMFAALLREGNQKESR) the chain is Cytoplasmic. A helical transmembrane segment spans residues 392–412 (LFWCGAFIQIGSFTGSAIMFP). Residues 413–427 (LVNVWKLFHSAPSCR) are Extracellular-facing.

The protein belongs to the riboflavin transporter family. As to expression, expressed in intestine.

Its subcellular location is the cell membrane. The catalysed reaction is riboflavin(in) = riboflavin(out). With respect to regulation, activity is strongly inhibited by riboflavin analogs, such as lumiflavin and lumichrome. In terms of biological role, riboflavin transporter. Riboflavin transport is Na(+)-independent but pH-sensitive. The chain is Riboflavin transporter rft-1 from Caenorhabditis elegans.